The primary structure comprises 103 residues: Large ribosomal subunit protein bL21 (103 aa).

It belongs to the bacterial ribosomal protein bL21 family. Part of the 50S ribosomal subunit. Contacts protein L20.

In terms of biological role, this protein binds to 23S rRNA in the presence of protein L20. This is Large ribosomal subunit protein bL21 from Shewanella sp. (strain ANA-3).